The following is a 205-amino-acid chain: HTH-type transcriptional regulator LuxR (205 aa).

Positions 15–75 (LKRKQQLMEI…EVLNHVVRQF (61 aa)) constitute an HTH tetR-type domain. The segment at residues 39-58 (HADIAEIAQVSVATVFNYFP) is a DNA-binding region (H-T-H motif).

In terms of biological role, regulatory protein of bacterial bioluminescence. It probably binds the autoinducer molecule and potentiates the transcription of the bioluminescence operon. This is HTH-type transcriptional regulator LuxR (luxR) from Vibrio harveyi (Beneckea harveyi).